A 138-amino-acid polypeptide reads, in one-letter code: uncharacterized protein (138 aa).

The tract at residues 89–138 (DDYEDDFEDSDFQDGDFDDFEDEDGFDDDDDFEDDDFEYEDEDNDLDFDE) is disordered.

This is an uncharacterized protein from Treponema pallidum (strain Nichols).